A 298-amino-acid polypeptide reads, in one-letter code: Glycine--tRNA ligase alpha subunit (298 aa).

Belongs to the class-II aminoacyl-tRNA synthetase family. As to quaternary structure, tetramer of two alpha and two beta subunits.

Its subcellular location is the cytoplasm. It catalyses the reaction tRNA(Gly) + glycine + ATP = glycyl-tRNA(Gly) + AMP + diphosphate. This is Glycine--tRNA ligase alpha subunit from Helicobacter hepaticus (strain ATCC 51449 / 3B1).